Here is a 655-residue protein sequence, read N- to C-terminus: p-hydroxybenzoic acid efflux pump subunit AaeB (655 aa).

The next 11 helical transmembrane spans lie at 13-33, 38-58, 69-89, 93-113, 121-141, 152-172, 370-390, 407-427, 431-451, 459-479, and 482-502; these read FAVKLATAIVLALFVGFHFQL, WAVLTAAIVAAGPAFAAGGEP, LRIIGTFIGCIAGLVIIIAMI, LLMILVCCIWAGFCTWISSLV, WGLAGYTALIIVITIQPEPLL, EIVIGIVCAIMADLLFSPRSI, LFWLWTGWTSGSGAMVMIAVV, FIYGTLAALPLGLLYFLVIIP, QSMLLLCISLAVLGFFLGIEV, MGALASTINIIVLDNPMTFHF, and FLDSALGQIVGCVLAFTVILL.

This sequence belongs to the aromatic acid exporter ArAE (TC 2.A.85) family.

The protein localises to the cell inner membrane. Forms an efflux pump with AaeA. Could function as a metabolic relief valve, allowing to eliminate certain compounds when they accumulate to high levels in the cell. The polypeptide is p-hydroxybenzoic acid efflux pump subunit AaeB (Escherichia coli O6:K15:H31 (strain 536 / UPEC)).